Reading from the N-terminus, the 231-residue chain is NKG2-C type II integral membrane protein (231 aa).

A compositionally biased stretch (polar residues) spans 1–12 (MNKQRGTFSEVS). Residues 1–31 (MNKQRGTFSEVSLAQDPKRQQRKPKDNKSSI) form a disordered region. At 1–70 (MNKQRGTFSE…CQGLLPPPEK (70 aa)) the chain is on the cytoplasmic side. The segment covering 16-28 (DPKRQQRKPKDNK) has biased composition (basic and acidic residues). A helical; Signal-anchor for type II membrane protein membrane pass occupies residues 71-93 (LTAEVLGIICIVLMATVLKTVVL). At 94-231 (IPFLEQNNSF…SKRYYCKHKL (138 aa)) the chain is on the extracellular side. N-linked (GlcNAc...) asparagine glycosylation is present at Asn100. A C-type lectin domain is found at 116–229 (HCPEEWITYS…GSSKRYYCKH (114 aa)). 3 disulfides stabilise this stretch: Cys117-Cys128, Cys145-Cys227, and Cys206-Cys219. An N-linked (GlcNAc...) asparagine glycan is attached at Asn149.

As to quaternary structure, heterodimer with KLRD1; disulfide-linked. KLRD1-KLRC2 receptor complex interacts with TYROBP/DAP12 homodimer; this interaction is necessary for the expression on the cell surface. In terms of tissue distribution, natural killer cells.

Its subcellular location is the cell membrane. In terms of biological role, immune activating receptor involved in self-nonself discrimination. In complex with KLRD1 on cytotoxic lymphocyte subsets, recognizes non-classical major histocompatibility MHC-E loaded with signal sequence-derived peptides from non-classical MHC-G molecules, likely playing a role in the generation and effector functions of adaptive natural killer (NK) cells and in maternal-fetal tolerance during pregnancy. Regulates the effector functions of terminally differentiated cytotoxic lymphocyte subsets, and in particular may play a role in adaptive NK cell response to viral infection. Upon MHC-E-peptide binding, transmits intracellular signals via the adapter protein TYROBP/DAP12, triggering the phosphorylation of proximal signaling molecules and cell activation. This chain is NKG2-C type II integral membrane protein (KLRC2), found in Macaca mulatta (Rhesus macaque).